The primary structure comprises 410 residues: Lissencephaly-1 homolog A (410 aa).

Residues 7–39 (QRDELNRAIADYLRSNGYEEAYSTFKKEAELDM) form the LisH domain. Positions 56–82 (TSVIRLQKKVMELESKLNEAKEEITLG) form a coiled coil. WD repeat units lie at residues 106–147 (GHRS…RTLK), 148–187 (GHTD…CIRT), 190–229 (GHDH…CVKT), 232–271 (GHRE…CKAE), 274–333 (EHEH…CLMT), 336–375 (GHDN…CMKT), and 378–410 (AHEH…WECR).

It belongs to the WD repeat LIS1/nudF family. In terms of assembly, can self-associate. Component of the cytosolic PAF-AH (I) heterotetrameric enzyme, which is composed of PAFAH1B1 (beta), PAFAH1B2 (alpha2) and PAFAH1B3 (alpha1) subunits. The catalytic activity of the enzyme resides in the alpha1 (PAFAH1B3) and alpha2 (PAFAH1B2) subunits, whereas the beta subunit (PAFAH1B1) has regulatory activity. Trimer formation is not essential for the catalytic activity. Interacts with dynein, dynactin, nde1 and ndel1.

The protein resides in the cytoplasm. The protein localises to the cytoskeleton. It localises to the microtubule organizing center. It is found in the centrosome. In terms of biological role, regulatory subunit (beta subunit) of the cytosolic type I platelet-activating factor (PAF) acetylhydrolase (PAF-AH (I)), an enzyme that catalyzes the hydrolyze of the acetyl group at the sn-2 position of PAF and its analogs and participates in PAF inactivation. Regulates the PAF-AH (I) activity in a catalytic dimer composition-dependent manner. Positively regulates the activity of the minus-end directed microtubule motor protein dynein. May enhance dynein-mediated microtubule sliding by targeting dynein to the microtubule plus end. Required for several dynein- and microtubule-dependent processes such as the maintenance of Golgi integrity, the peripheral transport of microtubule fragments and the coupling of the nucleus and centrosome. May be required for proliferation of neuronal precursors and neuronal migration. The sequence is that of Lissencephaly-1 homolog A (pafah1b1-1) from Salmo salar (Atlantic salmon).